Here is a 275-residue protein sequence, read N- to C-terminus: Phosphonoacetaldehyde hydrolase (275 aa).

Catalysis depends on Asp15, which acts as the Nucleophile. Mg(2+) is bound by residues Asp15 and Ala17. Lys56 (schiff-base intermediate with substrate) is an active-site residue. Asp189 lines the Mg(2+) pocket.

The protein belongs to the HAD-like hydrolase superfamily. PhnX family. Homodimer. Mg(2+) is required as a cofactor.

The enzyme catalyses phosphonoacetaldehyde + H2O = acetaldehyde + phosphate + H(+). In terms of biological role, involved in phosphonate degradation. This Pseudomonas entomophila (strain L48) protein is Phosphonoacetaldehyde hydrolase.